A 249-amino-acid chain; its full sequence is MSFKREGDDQSQLNILKKRRVSDLLSNFIPDDEATLMKNGRYSCLVCSHRPVFDTVDMLVVHRKGKRHLEGMKWFYGKKNQLRREIDKRRHQDYVKAEDDRQEPSSSAPLLTQTRKITHHALLRTVPYSSCHKKASERSESSSKEHRNDLANSHLSMRTESNDSRTTVHQGPSEVKGEAKKKKKGASTLSSSVCEPLTEQRRRELDHYLKLKSSGWLQDRSGKWVKDENVEFDSDEEEPTLLPPCSESS.

Residues 4 to 20 carry the Bipartite nuclear localization signal motif; sequence KREGDDQSQLNILKKRR. The segment at 42–74 adopts a Matrin-type zinc-finger fold; it reads YSCLVCSHRPVFDTVDMLVVHRKGKRHLEGMKW. A compositionally biased stretch (basic and acidic residues) spans 94-103; sequence YVKAEDDRQE. Disordered regions lie at residues 94-116, 128-199, and 228-249; these read YVKAEDDRQEPSSSAPLLTQTRK, YSSC…PLTE, and ENVEFDSDEEEPTLLPPCSESS. A compositionally biased stretch (polar residues) spans 104 to 115; it reads PSSSAPLLTQTR. The span at 134–149 shows a compositional bias: basic and acidic residues; it reads KASERSESSSKEHRND. Positions 150–170 are enriched in polar residues; the sequence is LANSHLSMRTESNDSRTTVHQ. Residues 230 to 239 show a composition bias toward acidic residues; sequence VEFDSDEEEP.

As to quaternary structure, component of the minor spliceosome, which splices U12-type introns.

The protein resides in the nucleus. It localises to the nucleoplasm. It is found in the nucleus speckle. Its function is as follows. As a component of the minor spliceosome, involved in the splicing of U12-type introns in pre-mRNAs. The polypeptide is Sodium channel modifier 1 (scnm1) (Danio rerio (Zebrafish)).